A 132-amino-acid chain; its full sequence is Small ribosomal subunit protein uS8 (132 aa).

The protein belongs to the universal ribosomal protein uS8 family. As to quaternary structure, part of the 30S ribosomal subunit. Contacts proteins S5 and S12.

In terms of biological role, one of the primary rRNA binding proteins, it binds directly to 16S rRNA central domain where it helps coordinate assembly of the platform of the 30S subunit. The chain is Small ribosomal subunit protein uS8 from Leuconostoc citreum (strain KM20).